The primary structure comprises 404 residues: Argininosuccinate synthase (404 aa).

ATP is bound by residues 12–20 (AYSGGLDTS) and A39. L-citrulline is bound by residues Y91 and S96. G121 is a binding site for ATP. The L-aspartate site is built by T123, N127, and D128. Position 127 (N127) interacts with L-citrulline. Positions 131, 180, 189, 265, and 277 each coordinate L-citrulline.

This sequence belongs to the argininosuccinate synthase family. Type 1 subfamily. In terms of assembly, homotetramer.

It localises to the cytoplasm. The catalysed reaction is L-citrulline + L-aspartate + ATP = 2-(N(omega)-L-arginino)succinate + AMP + diphosphate + H(+). It functions in the pathway amino-acid biosynthesis; L-arginine biosynthesis; L-arginine from L-ornithine and carbamoyl phosphate: step 2/3. In Vibrio cholerae serotype O1 (strain ATCC 39541 / Classical Ogawa 395 / O395), this protein is Argininosuccinate synthase.